The following is an 81-amino-acid chain: Exodeoxyribonuclease 7 small subunit (81 aa).

The protein belongs to the XseB family. In terms of assembly, heterooligomer composed of large and small subunits.

It localises to the cytoplasm. It catalyses the reaction Exonucleolytic cleavage in either 5'- to 3'- or 3'- to 5'-direction to yield nucleoside 5'-phosphates.. In terms of biological role, bidirectionally degrades single-stranded DNA into large acid-insoluble oligonucleotides, which are then degraded further into small acid-soluble oligonucleotides. This chain is Exodeoxyribonuclease 7 small subunit, found in Nitratidesulfovibrio vulgaris (strain ATCC 29579 / DSM 644 / CCUG 34227 / NCIMB 8303 / VKM B-1760 / Hildenborough) (Desulfovibrio vulgaris).